A 156-amino-acid polypeptide reads, in one-letter code: ATP synthase subunit b (156 aa).

Residues 12–32 (VAFLIFVLFCMKYVWPPVITA) traverse the membrane as a helical segment.

Belongs to the ATPase B chain family. In terms of assembly, F-type ATPases have 2 components, F(1) - the catalytic core - and F(0) - the membrane proton channel. F(1) has five subunits: alpha(3), beta(3), gamma(1), delta(1), epsilon(1). F(0) has three main subunits: a(1), b(2) and c(10-14). The alpha and beta chains form an alternating ring which encloses part of the gamma chain. F(1) is attached to F(0) by a central stalk formed by the gamma and epsilon chains, while a peripheral stalk is formed by the delta and b chains.

The protein resides in the cell inner membrane. In terms of biological role, f(1)F(0) ATP synthase produces ATP from ADP in the presence of a proton or sodium gradient. F-type ATPases consist of two structural domains, F(1) containing the extramembraneous catalytic core and F(0) containing the membrane proton channel, linked together by a central stalk and a peripheral stalk. During catalysis, ATP synthesis in the catalytic domain of F(1) is coupled via a rotary mechanism of the central stalk subunits to proton translocation. Component of the F(0) channel, it forms part of the peripheral stalk, linking F(1) to F(0). The polypeptide is ATP synthase subunit b (Pseudomonas putida (strain GB-1)).